The sequence spans 763 residues: Nibrin (763 aa).

One can recognise an FHA domain in the interval 22–81 (YVVGRKNCAILIPEDQSISRCHATLSVSHPSANLGQTNAASVLSIKDSSKYGTTVNGDKM). 2 BRCT domains span residues 102 to 179 (SKYR…CELL) and 215 to 324 (KRKS…NPRR). Disordered regions lie at residues 389–496 (VKET…SSQT), 535–593 (SKAA…SEIE), and 738–763 (QTQQ…KRRR). A compositionally biased stretch (basic and acidic residues) spans 423–433 (LFREDETDTRK). The span at 434–443 (NTPSLLPTKS) shows a compositional bias: polar residues. Positions 469 to 474 (AKKRDR) match the Nuclear localization signal motif. Residues 473–482 (DRAEDEKEAS) show a composition bias toward basic and acidic residues. Basic and acidic residues predominate over residues 742 to 752 (VREESLAEDLF). Residues 748–757 (AEDLFRYNPK) carry the FxF/Y motif motif.

This sequence belongs to the Nibrin family. As to quaternary structure, component of the MRN complex composed of two heterodimers rad50 and mre11 associated with a single nbn.

The protein localises to the nucleus. It localises to the chromosome. The protein resides in the PML body. It is found in the telomere. Its function is as follows. Component of the MRN complex, which plays a central role in double-strand break (DSB) repair, DNA recombination, maintenance of telomere integrity and meiosis. The MRN complex is involved in the repair of DNA double-strand breaks (DSBs) via homologous recombination (HR), an error-free mechanism which primarily occurs during S and G2 phases. The complex (1) mediates the end resection of damaged DNA, which generates proper single-stranded DNA, a key initial steps in HR, and is (2) required for the recruitment of other repair factors and efficient activation of ATM and ATR upon DNA damage. The MRN complex possesses single-strand endonuclease activity and double-strand-specific 3'-5' exonuclease activity, which are provided by MRE11, to initiate end resection, which is required for single-strand invasion and recombination. Within the MRN complex, nbn acts as a protein-protein adapter, which specifically recognizes and binds phosphorylated proteins, promoting their recruitment to DNA damage sites. Recruits mre11 and rad50 components of the MRN complex to DSBs in response to DNA damage. Promotes the recruitment of PI3/PI4-kinase family members atm, atr, and probably DNA-PKcs to the DNA damage sites, activating their functions. Mediates the recruitment of phosphorylated rbbp8/CtIP to DSBs, leading to cooperation between the MRN complex and rbbp8/CtIP to initiate end resection. The MRN complex promotes recruitment of topbp1 to DNA damage sites. The MRN complex and rbbp8/CtIP are also required for chromosome alignment during metaphase. The protein is Nibrin of Xenopus laevis (African clawed frog).